Consider the following 170-residue polypeptide: Adenine phosphoribosyltransferase (170 aa).

Belongs to the purine/pyrimidine phosphoribosyltransferase family. As to quaternary structure, homodimer.

Its subcellular location is the cytoplasm. It catalyses the reaction AMP + diphosphate = 5-phospho-alpha-D-ribose 1-diphosphate + adenine. It functions in the pathway purine metabolism; AMP biosynthesis via salvage pathway; AMP from adenine: step 1/1. In terms of biological role, catalyzes a salvage reaction resulting in the formation of AMP, that is energically less costly than de novo synthesis. This chain is Adenine phosphoribosyltransferase, found in Trichodesmium erythraeum (strain IMS101).